The primary structure comprises 984 residues: Translation initiation factor IF-2 (984 aa).

The interval 32–402 (PAKNATSTLT…TQPQRAAKRK (371 aa)) is disordered. A compositionally biased stretch (low complexity) spans 89–123 (PAETEAQASPAQPEAKAAAPAAEAEEAPAAKPAPA). The segment covering 126 to 136 (RKAEARTEAPR) has biased composition (basic and acidic residues). Composition is skewed to low complexity over residues 154 to 172 (APET…SAAP) and 187 to 197 (AETTESAPAEP). Positions 198–220 (AAEKAPAEKRRYEVSMEPEKDSV) are enriched in basic and acidic residues. Positions 255–270 (RPDPAAVQAQAAAAAQ) are enriched in low complexity. Basic and acidic residues predominate over residues 271–283 (AREERAERPDRGP). Low complexity predominate over residues 308 to 334 (GRPAPRSGAPRPGGARPAAGFGQPAQA). The 170-residue stretch at 482–651 (PRPPVVTIMG…ALQAEVLELK (170 aa)) folds into the tr-type G domain. A G1 region spans residues 491–498 (GHVDHGKT). 491-498 (GHVDHGKT) provides a ligand contact to GTP. Positions 516–520 (GITQH) are G2. The segment at 537 to 540 (DTPG) is G3. Residues 537-541 (DTPGH) and 591-594 (NKID) contribute to the GTP site. Residues 591–594 (NKID) form a G4 region. A G5 region spans residues 627–629 (SAK).

It belongs to the TRAFAC class translation factor GTPase superfamily. Classic translation factor GTPase family. IF-2 subfamily.

Its subcellular location is the cytoplasm. Functionally, one of the essential components for the initiation of protein synthesis. Protects formylmethionyl-tRNA from spontaneous hydrolysis and promotes its binding to the 30S ribosomal subunits. Also involved in the hydrolysis of GTP during the formation of the 70S ribosomal complex. The protein is Translation initiation factor IF-2 of Oleidesulfovibrio alaskensis (strain ATCC BAA-1058 / DSM 17464 / G20) (Desulfovibrio alaskensis).